We begin with the raw amino-acid sequence, 419 residues long: Caspase-12 (419 aa).

The CARD domain occupies 1–92; sequence MAARRTHERD…QLSLQFSNDE (92 aa). Ser85 bears the Phosphoserine mark. Residues 88 to 113 form a disordered region; that stretch reads FSNDEDDGPQKICTPSSPSESKRKVE. Catalysis depends on residues His250 and Cys298.

It belongs to the peptidase C14A family. In terms of assembly, heterotetramer that consists of two anti-parallel arranged heterodimers, each one formed by two subunits (Potential). Interacts with TRAF2 under resting conditions; this interaction is reduced in ER stress conditions. Mainly expressed in skeletal muscle and lung.

In terms of biological role, involved in the activation cascade of caspases responsible for apoptosis execution. This Mus musculus (Mouse) protein is Caspase-12 (Casp12).